The primary structure comprises 411 residues: Class E basic helix-loop-helix protein 40 (411 aa).

The interval 1-21 is disordered; it reads MERIPSAQPPPTCLPKTPGLE. An essential for interaction with BMAL1, E-box binding and repressor activity against the CLOCK-BMAL1 heterodimer region spans residues 1 to 139; sequence MERIPSAQPP…LSGKNIEAGQ (139 aa). In terms of domain architecture, bHLH spans 52–107; sequence TYKLPHRLIEKKRRDRINECIAQLKDLLPEHLKLTTLGHLEKAVVLELTLKHVKAL. The necessary for interaction with RXRA and repressor activity against RXRA stretch occupies residues 75–79; it reads LKDLL. The region spanning 142–175 is the Orange domain; it reads FCSGFQTCAREVLQYLAKHENTRDLKSSQLVTHL. Residue Lys159 forms a Glycyl lysine isopeptide (Lys-Gly) (interchain with G-Cter in SUMO1, SUMO2 and SUMO3) linkage. Residue Lys167 forms a Glycyl lysine isopeptide (Lys-Gly) (interchain with G-Cter in SUMO2) linkage. Positions 186–293 are disordered; sequence SASRKPLDSA…EPPTKKSRMQ (108 aa). Ser235 bears the Phosphoserine mark. Basic and acidic residues predominate over residues 248-271; sequence ELEKGDLRSEQPYFKSDHGRRFTV. Residue Lys279 forms a Glycyl lysine isopeptide (Lys-Gly) (interchain with G-Cter in SUMO1); alternate linkage. A Glycyl lysine isopeptide (Lys-Gly) (interchain with G-Cter in SUMO1, SUMO2 and SUMO3); alternate cross-link involves residue Lys279. A Glycyl lysine isopeptide (Lys-Gly) (interchain with G-Cter in SUMO2); alternate cross-link involves residue Lys279. Lys288 participates in a covalent cross-link: Glycyl lysine isopeptide (Lys-Gly) (interchain with G-Cter in SUMO2). The residue at position 383 (Ser383) is a Phosphoserine.

As to quaternary structure, homodimer. Heterodimer with BHLHE41/DEC2. Interacts with TCF3/E47. Interacts with ubiquitin-conjugating enzyme UBE2I/UBC9. Interacts with HDAC1, SUMO1, RXRA and BMAL1. In terms of processing, ubiquitinated; which may lead to proteasomal degradation. Post-translationally, sumoylation inhibits its ubiquitination and promotes its negative regulation of the CLOCK-BMAL1 heterodimer transcriptional activator activity. As to expression, expressed in heart, spleen, lung, liver, muscle, kidney, uterus and gut. Highly expressed in the cerebral cortex, especially in the fifth layer, thalamus, superior colliculus, olfactory bulb, piriform cortex, hippocampus and hypothalamic nuclei.

Its subcellular location is the cytoplasm. It is found in the nucleus. Transcriptional repressor involved in the regulation of the circadian rhythm by negatively regulating the activity of the clock genes and clock-controlled genes. Acts as the negative limb of a novel autoregulatory feedback loop (DEC loop) which differs from the one formed by the PER and CRY transcriptional repressors (PER/CRY loop). Both these loops are interlocked as it represses the expression of PER1/2 and in turn is repressed by PER1/2 and CRY1/2. Represses the activity of the circadian transcriptional activator: CLOCK-BMAL1|BMAL2 heterodimer by competing for the binding to E-box elements (5'-CACGTG-3') found within the promoters of its target genes. Negatively regulates its own expression and the expression of DBP and BHLHE41/DEC2. Acts as a corepressor of RXR and the RXR-LXR heterodimers and represses the ligand-induced RXRA and NR1H3/LXRA transactivation activity. May be involved in the regulation of chondrocyte differentiation via the cAMP pathway. Represses the transcription of NR0B2 and attentuates the transactivation of NR0B2 by the CLOCK-BMAL1 complex. Drives the circadian rhythm of blood pressure through transcriptional repression of ATP1B1 in the cardiovascular system. The polypeptide is Class E basic helix-loop-helix protein 40 (Bhlhe40) (Rattus norvegicus (Rat)).